The chain runs to 208 residues: Octanoyltransferase (208 aa).

Positions 29–208 constitute a BPL/LPL catalytic domain; that stretch reads KTQDELVWLL…KEFNKVFCNC (180 aa). Substrate-binding positions include 68–75, 140–142, and 153–155; these read RGGKYTYH, AFG, and GVS. The active-site Acyl-thioester intermediate is Cys171.

The protein belongs to the LipB family.

The protein localises to the cytoplasm. It carries out the reaction octanoyl-[ACP] + L-lysyl-[protein] = N(6)-octanoyl-L-lysyl-[protein] + holo-[ACP] + H(+). Its pathway is protein modification; protein lipoylation via endogenous pathway; protein N(6)-(lipoyl)lysine from octanoyl-[acyl-carrier-protein]: step 1/2. Its function is as follows. Catalyzes the transfer of endogenously produced octanoic acid from octanoyl-acyl-carrier-protein onto the lipoyl domains of lipoate-dependent enzymes. Lipoyl-ACP can also act as a substrate although octanoyl-ACP is likely to be the physiological substrate. The polypeptide is Octanoyltransferase (Ehrlichia ruminantium (strain Gardel)).